Consider the following 376-residue polypeptide: Transmembrane protein 43 homolog (376 aa).

The Cytoplasmic portion of the chain corresponds to 1–10 (MASLSETLRS). A helical membrane pass occupies residues 11–31 (HWPIALFGVILFVAGGTELYW). The Lumenal portion of the chain corresponds to 32 to 277 (NEGRAVHNMM…EVFRLEARAQ (246 aa)). Residues 278–298 (VLHTWWWRFVGWLLIFFGVTC) form a helical membrane-spanning segment. The Cytoplasmic portion of the chain corresponds to 299-323 (NTKILRLLFVRVPLLVALAPDPQFP). Helical transmembrane passes span 324 to 344 (VTGN…VAWI) and 345 to 365 (LHRP…YVWF). The Cytoplasmic portion of the chain corresponds to 366 to 376 (TRNLVDYHRLD).

The protein belongs to the TMEM43 family.

It localises to the endoplasmic reticulum membrane. It is found in the nucleus envelope. Involved in lipid metabolism and utilization. The sequence is that of Transmembrane protein 43 homolog from Drosophila melanogaster (Fruit fly).